The primary structure comprises 1306 residues: Putative late blight resistance protein homolog R1A-10 (1306 aa).

Coiled coils occupy residues S407–Q428 and P520–S542. An NB-ARC domain is found at R521–G808. G554 to T561 contacts ATP. LRR repeat units lie at residues A858 to H881, L921 to N935, F936 to R961, L979 to M1007, L1010 to D1035, T1057 to F1081, P1082 to P1106, Y1110 to H1129, L1130 to N1153, F1156 to N1181, and E1216 to L1240. The region spanning L1240–L1306 is the HMA domain.

The protein belongs to the disease resistance NB-LRR family.

The protein localises to the cytoplasm. It localises to the membrane. Its function is as follows. Confers resistance to late blight (Phytophthora infestans) races carrying the avirulence gene Avr1. Resistance proteins guard the plant against pathogens that contain an appropriate avirulence protein via an indirect interaction with this avirulence protein. That triggers a defense system including the hypersensitive response, which restricts the pathogen growth. The polypeptide is Putative late blight resistance protein homolog R1A-10 (R1A-10) (Solanum demissum (Wild potato)).